The sequence spans 871 residues: Leucine--tRNA ligase (871 aa).

Residues Pro-42–His-52 carry the 'HIGH' region motif. The short motif at Thr-634–Ser-638 is the 'KMSKS' region element. Lys-637 is a binding site for ATP.

Belongs to the class-I aminoacyl-tRNA synthetase family.

The protein localises to the cytoplasm. The enzyme catalyses tRNA(Leu) + L-leucine + ATP = L-leucyl-tRNA(Leu) + AMP + diphosphate. This Nostoc punctiforme (strain ATCC 29133 / PCC 73102) protein is Leucine--tRNA ligase.